The following is an 83-amino-acid chain: Cytochrome b559 subunit alpha (83 aa).

A helical transmembrane segment spans residues 21–35 (VIHSITIPSLFIAGW). His23 provides a ligand contact to heme.

The protein belongs to the PsbE/PsbF family. Heterodimer of an alpha subunit and a beta subunit. PSII is composed of 1 copy each of membrane proteins PsbA, PsbB, PsbC, PsbD, PsbE, PsbF, PsbH, PsbI, PsbJ, PsbK, PsbL, PsbM, PsbT, PsbX, PsbY, PsbZ, Psb30/Ycf12, at least 3 peripheral proteins of the oxygen-evolving complex and a large number of cofactors. It forms dimeric complexes. Heme b serves as cofactor.

The protein localises to the plastid. The protein resides in the chloroplast thylakoid membrane. Its function is as follows. This b-type cytochrome is tightly associated with the reaction center of photosystem II (PSII). PSII is a light-driven water:plastoquinone oxidoreductase that uses light energy to abstract electrons from H(2)O, generating O(2) and a proton gradient subsequently used for ATP formation. It consists of a core antenna complex that captures photons, and an electron transfer chain that converts photonic excitation into a charge separation. The polypeptide is Cytochrome b559 subunit alpha (Adiantum capillus-veneris (Maidenhair fern)).